Here is a 232-residue protein sequence, read N- to C-terminus: Thiamine import ATP-binding protein ThiQ (232 aa).

The 229-residue stretch at 2-230 (LKLTDITWLY…KASASALLGI (229 aa)) folds into the ABC transporter domain. 32–39 (GPSGAGKS) contributes to the ATP binding site.

This sequence belongs to the ABC transporter superfamily. Thiamine importer (TC 3.A.1.19.1) family. In terms of assembly, the complex is composed of two ATP-binding proteins (ThiQ), two transmembrane proteins (ThiP) and a solute-binding protein (ThiB).

Its subcellular location is the cell inner membrane. It catalyses the reaction thiamine(out) + ATP + H2O = thiamine(in) + ADP + phosphate + H(+). Part of the ABC transporter complex ThiBPQ involved in thiamine import. Responsible for energy coupling to the transport system. The sequence is that of Thiamine import ATP-binding protein ThiQ from Shigella sonnei (strain Ss046).